The following is a 368-amino-acid chain: Phosphotransferase IIC component GlvC (368 aa).

Over Met-1 to Ala-11 the chain is Periplasmic. Positions Met-1–Asp-368 constitute a PTS EIIC type-1 domain. The helical transmembrane segment at Met-12–Leu-32 threads the bilayer. Topologically, residues Gln-33–Gly-59 are cytoplasmic. Residues Gly-60–Ala-80 traverse the membrane as a helical segment. The Periplasmic portion of the chain corresponds to Lys-81–Arg-86. Residues Ala-87 to Met-107 form a helical membrane-spanning segment. The Cytoplasmic segment spans residues Thr-108–Met-129. The helical transmembrane segment at Met-130–Val-150 threads the bilayer. Over Thr-151–Ser-173 the chain is Periplasmic. A helical transmembrane segment spans residues Tyr-174–Trp-194. Topologically, residues Pro-195–Gln-198 are cytoplasmic. The helical transmembrane segment at Met-199–Phe-221 threads the bilayer. The Periplasmic portion of the chain corresponds to Leu-222–Arg-224. The chain crosses the membrane as a helical span at residues Ile-225 to Ala-245. The Cytoplasmic portion of the chain corresponds to Val-246–Gly-276. The helical transmembrane segment at Phe-277 to Phe-297 threads the bilayer. Residues Thr-298–Lys-306 lie on the Periplasmic side of the membrane. A helical transmembrane segment spans residues Val-307 to Leu-327. A topological domain (cytoplasmic) is located at residue Glu-328. A helical transmembrane segment spans residues Phe-329–Met-349. Residues Ser-350 to Asp-368 lie on the Periplasmic side of the membrane.

The protein resides in the cell inner membrane. In terms of biological role, the phosphoenolpyruvate-dependent sugar phosphotransferase system (PTS), a major carbohydrate active -transport system, catalyzes the phosphorylation of incoming sugar substrates concomitant with their translocation across the cell membrane. This operon may be cryptic in wild-type K12 strains. The protein is Phosphotransferase IIC component GlvC of Escherichia coli (strain K12).